Here is a 336-residue protein sequence, read N- to C-terminus: UPF0104 membrane protein MJ1595 (336 aa).

The next 9 helical transmembrane spans lie at 9 to 29, 40 to 60, 68 to 88, 127 to 147, 154 to 174, 223 to 243, 245 to 265, 285 to 305, and 306 to 326; these read STILLIISFLFILAIMAYIGL, NPEYVILAFILQILVSVILSA, ILGYSANFKNIFLLVLMGLFI, VLDTAIFLFFTLFVIGYFVVT, YLILSWIFLFSLTAIIIYLIA, WEVVVAIFLSVMRYIFDILKL, LLFLSLSYVVSVICVSAVYLI, VMILSFSAFNIPPSVAAAVTL, and LDRLVSYILPTILGYIAMLII.

It belongs to the UPF0104 family.

It localises to the cell membrane. The chain is UPF0104 membrane protein MJ1595 from Methanocaldococcus jannaschii (strain ATCC 43067 / DSM 2661 / JAL-1 / JCM 10045 / NBRC 100440) (Methanococcus jannaschii).